The primary structure comprises 400 residues: Clotting factor B (400 aa).

The N-terminal stretch at 1 to 23 is a signal peptide; sequence MTWICVITLFALASATLGNKVSR. One can recognise a Clip domain in the interval 36 to 80; sequence ECTARGGLKGSCKSLIDCPSVLATLKDSFPVVCSWNGRFQPIVCC. Intrachain disulfides connect C37–C79, C47–C68, and C53–C80. Residues 104–124 constitute a propeptide, activation peptide; the sequence is LPRLHISGCGKRKVKIDITTV. The N-linked (GlcNAc...) asparagine glycan is linked to N140. The Peptidase S1 domain occupies 148–392; it reads IAGGVEAKIG…YLDWIAKVTN (245 aa). Residues H192 and D240 each act as charge relay system in the active site. N251 carries an N-linked (GlcNAc...) asparagine glycan. 2 cysteine pairs are disulfide-bonded: C307-C329 and C340-C368. The Charge relay system role is filled by S344. N352 is a glycosylation site (N-linked (GlcNAc...) asparagine).

It belongs to the peptidase S1 family. CLIP subfamily. Upon activation by factor C, it is converted to a two-chain active form composed of a light and a heavy chain linked by a disulfide bond.

It is found in the secreted. It carries out the reaction Selective cleavage of 98-Arg-|-Ile-99 bond in Limulus proclotting enzyme to form active clotting enzyme.. Strongly inhibited by alpha2-plasmin inhibitor and DFP. Partially inhibited by benzamidine, leupeptin and PCMB. Its function is as follows. This enzyme is closely associated with an endotoxin-sensitive hemolymph coagulation system which may play important roles in both hemostasis and host defense mechanisms. Its active form catalyzes the activation of proclotting enzyme. Does not activate the mammalian coagulation factors factor IX, factor X, prothrombin, plasminogen, protein C or prekallikrein. Does not hydrolyze fibrinogen. Does not catalyze the activation of factor C or coagulogen. The chain is Clotting factor B from Tachypleus tridentatus (Japanese horseshoe crab).